A 515-amino-acid polypeptide reads, in one-letter code: Bifunctional purine biosynthesis protein PurH (515 aa).

Residues 1 to 145 (MTKRVLISVS…KNHASVTVVV (145 aa)) enclose the MGS-like domain.

This sequence belongs to the PurH family.

It carries out the reaction (6R)-10-formyltetrahydrofolate + 5-amino-1-(5-phospho-beta-D-ribosyl)imidazole-4-carboxamide = 5-formamido-1-(5-phospho-D-ribosyl)imidazole-4-carboxamide + (6S)-5,6,7,8-tetrahydrofolate. The catalysed reaction is IMP + H2O = 5-formamido-1-(5-phospho-D-ribosyl)imidazole-4-carboxamide. Its pathway is purine metabolism; IMP biosynthesis via de novo pathway; 5-formamido-1-(5-phospho-D-ribosyl)imidazole-4-carboxamide from 5-amino-1-(5-phospho-D-ribosyl)imidazole-4-carboxamide (10-formyl THF route): step 1/1. It participates in purine metabolism; IMP biosynthesis via de novo pathway; IMP from 5-formamido-1-(5-phospho-D-ribosyl)imidazole-4-carboxamide: step 1/1. This Streptococcus pneumoniae (strain Taiwan19F-14) protein is Bifunctional purine biosynthesis protein PurH.